The primary structure comprises 199 residues: MKQFIDFIPLILFFIVYKLEPRIVELAGHSFTFGGIFSATAVLILASLLVYGTLFLIQRRLEKGQWITLLACLVFGGMTLTFQSETFLKWKAPVVNWLFALGFAASHFIGDRPLIQRILGHAVSLPAPLWTRLNLAWVAFFVFSGCANLFVAFTFHEFWVDFKVFGSLGMTVLFLVGQGVFLARHMHEHSTESAAKSKD.

6 helical membrane-spanning segments follow: residues 4–24, 36–56, 64–84, 90–110, 135–155, and 162–182; these read FIDF…PRIV, IFSA…TLFL, GQWI…TFQS, WKAP…HFIG, LAWV…AFTF, and FKVF…GVFL.

Belongs to the YciB family.

It localises to the cell inner membrane. Functionally, plays a role in cell envelope biogenesis, maintenance of cell envelope integrity and membrane homeostasis. This chain is Inner membrane-spanning protein YciB, found in Azotobacter vinelandii (strain DJ / ATCC BAA-1303).